Here is an 858-residue protein sequence, read N- to C-terminus: Translation initiation factor IF-2 (858 aa).

The disordered stretch occupies residues Lys-59–Lys-147. The tr-type G domain occupies Pro-361–Lys-530. A G1 region spans residues Gly-370–Thr-377. Residue Gly-370 to Thr-377 coordinates GTP. The interval Gly-395 to His-399 is G2. Positions Asp-416–Gly-419 are G3. GTP is bound by residues Asp-416–His-420 and Asn-470–Asp-473. Positions Asn-470 to Asp-473 are G4. The interval Ser-506 to Lys-508 is G5.

The protein belongs to the TRAFAC class translation factor GTPase superfamily. Classic translation factor GTPase family. IF-2 subfamily.

Its subcellular location is the cytoplasm. In terms of biological role, one of the essential components for the initiation of protein synthesis. Protects formylmethionyl-tRNA from spontaneous hydrolysis and promotes its binding to the 30S ribosomal subunits. Also involved in the hydrolysis of GTP during the formation of the 70S ribosomal complex. This chain is Translation initiation factor IF-2, found in Caldicellulosiruptor saccharolyticus (strain ATCC 43494 / DSM 8903 / Tp8T 6331).